The chain runs to 83 residues: Kunitz-type serine protease inhibitor textilinin-1 (83 aa).

A signal peptide spans 1–24 (MSSGGLLLLLGLLTLWEVLTPVSS). The region spanning 31–81 (CELPADTGPCRVRFPSFYYNPDEKKCLEFIYGGCEGNANNFITKEECESTC) is the BPTI/Kunitz inhibitor domain. Cystine bridges form between Cys-31/Cys-81, Cys-40/Cys-64, and Cys-56/Cys-77.

Belongs to the venom Kunitz-type family. Expressed by the venom gland.

It localises to the secreted. Functionally, strongly inhibits plasmin (Ki=0.44 nM) and trypsin (Ki=0.42 nM). Has little effect on plasma (Ki=1870 nM) and tissue (Ki=12900 nM) kallikreins. Its plasmin-inhibiting activity makes it an antifibrinolytic agent. In vivo, reduces blood loss in a mouse tail vein bleeding model. In Pseudonaja textilis textilis (Eastern brown snake), this protein is Kunitz-type serine protease inhibitor textilinin-1.